Reading from the N-terminus, the 142-residue chain is Large ribosomal subunit protein uL16 (142 aa).

This sequence belongs to the universal ribosomal protein uL16 family. In terms of assembly, part of the 50S ribosomal subunit.

Its function is as follows. Binds 23S rRNA and is also seen to make contacts with the A and possibly P site tRNAs. The chain is Large ribosomal subunit protein uL16 from Pseudothermotoga lettingae (strain ATCC BAA-301 / DSM 14385 / NBRC 107922 / TMO) (Thermotoga lettingae).